Reading from the N-terminus, the 207-residue chain is Small ribosomal subunit protein uS4 (207 aa).

The disordered stretch occupies residues 30–54 (DKCKLDSKPGQHGRTSGARTSDYGN). Polar residues predominate over residues 42–53 (GRTSGARTSDYG). An S4 RNA-binding domain is found at 97 to 160 (SRLDNVVYRM…KKQVRIAEAL (64 aa)).

It belongs to the universal ribosomal protein uS4 family. Part of the 30S ribosomal subunit. Contacts protein S5. The interaction surface between S4 and S5 is involved in control of translational fidelity.

Its function is as follows. One of the primary rRNA binding proteins, it binds directly to 16S rRNA where it nucleates assembly of the body of the 30S subunit. Functionally, with S5 and S12 plays an important role in translational accuracy. The sequence is that of Small ribosomal subunit protein uS4 from Cupriavidus taiwanensis (strain DSM 17343 / BCRC 17206 / CCUG 44338 / CIP 107171 / LMG 19424 / R1) (Ralstonia taiwanensis (strain LMG 19424)).